The chain runs to 307 residues: Porphobilinogen deaminase (307 aa).

The residue at position 241 (cysteine 241) is an S-(dipyrrolylmethanemethyl)cysteine.

Belongs to the HMBS family. Monomer. Dipyrromethane serves as cofactor.

The enzyme catalyses 4 porphobilinogen + H2O = hydroxymethylbilane + 4 NH4(+). The protein operates within porphyrin-containing compound metabolism; protoporphyrin-IX biosynthesis; coproporphyrinogen-III from 5-aminolevulinate: step 2/4. In terms of biological role, tetrapolymerization of the monopyrrole PBG into the hydroxymethylbilane pre-uroporphyrinogen in several discrete steps. The chain is Porphobilinogen deaminase from Coxiella burnetii (strain RSA 331 / Henzerling II).